Reading from the N-terminus, the 190-residue chain is Putative histone H1.6 (190 aa).

Positions 1 to 29 (MSDVAVAETPAVKTPTKAPKANATKVPKV) are disordered. The residue at position 2 (Ser2) is an N-acetylserine. The span at 9–29 (TPAVKTPTKAPKANATKVPKV) shows a compositional bias: low complexity. The H15 domain occupies 34 to 110 (AHPPFINMVT…GATGRFRVAE (77 aa)). The tract at residues 141-190 (KKTGDKVKKAKSPKKIAKPAAKKATKSPSKKVAPKKAAAKPAKKTAALKA) is disordered. A compositionally biased stretch (basic residues) spans 148–183 (KKAKSPKKIAKPAAKKATKSPSKKVAPKKAAAKPAK).

This sequence belongs to the histone H1/H5 family.

The protein resides in the nucleus. It localises to the chromosome. In terms of biological role, histones H1 are necessary for the condensation of nucleosome chains into higher-order structures. The chain is Putative histone H1.6 (hil-6) from Caenorhabditis elegans.